Consider the following 468-residue polypeptide: uncharacterized protein (468 aa).

The N-terminal stretch at 1–27 (MRKWYFILLAGVLTSVILAFVYDKTKA) is a signal peptide. PbH1 repeat units follow at residues 125-154 (KHDIAISGLTIQDLSVSSEEATAIGIYVSG), 156-185 (SSHIAIKDNHIRGIKTTADEGNAHGIAVYG), 189-214 (MKDIRIEDNTVEKLTLGASEAVVLNG), 216-238 (IDGFTVAGNVVRNNNNIGIDLIG), 249-283 (VRNGVVENNTVYQNSTYGNPAYGDEYSAGGIYVDG), 284-305 (GHDIEIKNNTVYDNDIGIEATS), 312-334 (ANAIQITDNKVYNNAYTGISIGG), and 397-420 (NEGNTVNHNVYHKEADQDGIWMWK).

The protein resides in the secreted. This is an uncharacterized protein from Bacillus subtilis (strain 168).